Reading from the N-terminus, the 142-residue chain is Gonadotropin subunit beta-2 (142 aa).

A signal peptide spans 1-23 (MLGLHVGTLISLFLCILLEPIEG). Disulfide bonds link C29-C77, C43-C92, C46-C130, C54-C108, C58-C110, and C113-C120. A glycan (N-linked (GlcNAc...) asparagine) is linked at N33.

The protein belongs to the glycoprotein hormones subunit beta family. As to quaternary structure, heterodimer of an alpha and a beta chain.

The protein resides in the secreted. Involved in gametogenesis and steroidogenesis. The protein is Gonadotropin subunit beta-2 (cgbb) of Oncorhynchus tshawytscha (Chinook salmon).